Here is a 118-residue protein sequence, read N- to C-terminus: Holo-[acyl-carrier-protein] synthase (118 aa).

Residues Asp5 and Glu50 each coordinate Mg(2+).

This sequence belongs to the P-Pant transferase superfamily. AcpS family. Mg(2+) serves as cofactor.

It is found in the cytoplasm. It carries out the reaction apo-[ACP] + CoA = holo-[ACP] + adenosine 3',5'-bisphosphate + H(+). Functionally, transfers the 4'-phosphopantetheine moiety from coenzyme A to a Ser of acyl-carrier-protein. The polypeptide is Holo-[acyl-carrier-protein] synthase (Aliarcobacter butzleri (strain RM4018) (Arcobacter butzleri)).